The following is a 1209-amino-acid chain: Major DNA-binding protein (1209 aa).

Residues 290–312 (NAGKGSGRAQRQGDGSGSKNSAS) form a disordered region. Residues 503–516 (CGLCNQATRPACAH) fold into a zinc finger. The short motif at 849-850 (FW) is the Required for filament formation element. The required for nuclear localization stretch occupies residues 1182 to 1209 (QKRSLPDDILFDMGAPPEKKSGLTFDML).

Belongs to the herpesviridae major DNA-binding protein family. Homooligomers. Forms double-helical filaments necessary for the formation of replication compartments within the host nucleus. Interacts with the origin-binding protein. Interacts with the helicase primase complex; this interaction stimulates primer synthesis activity of the helicase-primase complex. Interacts with the DNA polymerase. Interacts with the alkaline exonuclease; this interaction increases its nuclease processivity.

Its subcellular location is the host nucleus. Functionally, plays several crucial roles in viral infection. Participates in the opening of the viral DNA origin to initiate replication by interacting with the origin-binding protein. May disrupt loops, hairpins and other secondary structures present on ssDNA to reduce and eliminate pausing of viral DNA polymerase at specific sites during elongation. Promotes viral DNA recombination by performing strand-transfer, characterized by the ability to transfer a DNA strand from a linear duplex to a complementary single-stranded DNA circle. Can also catalyze the renaturation of complementary single strands. Additionally, reorganizes the host cell nucleus, leading to the formation of prereplicative sites and replication compartments. This process is driven by the protein which can form double-helical filaments in the absence of DNA. This Equine herpesvirus 1 (strain V592) (EHV-1) protein is Major DNA-binding protein.